A 428-amino-acid polypeptide reads, in one-letter code: MEVADSLLGNGSDVPPPCELGLENETLVCLEQPRAAKEWQPAVQILLYSLIFLLSVLGNTLVITVLIRNKRMRTVTNIFLLSLAVSDLMLCLFCMPFNLIPNLLKDFIFGSAVCKTTTYFMGTSVSVSTFNLVAISLERYGAICKPLQSRVWQTKSHALKVIATTWCLSFTIMTPYPIYSNLVPFTKTNNQTANMCRFLLPNDVMQQSWHTFLLLILFLIPGIVMMVAYGLISLELYQGIKFDAIQKKSARDRNPSTGSSGRYEDGDGCYLQKARPRRRLELRQLSTPGSGRLNRIRSTSSTANLMAKKRVIRMLMVIVVLFFLCWMPIFSANAWRAYDTASAERRLSGTPISFILLLSYTSSCVNPIIYCFMNKRFRLGFLATFPCCPHPGPPGPRGEVGEEEEGRTTGASLSRYSYSHMSASAPGP.

Topologically, residues 1 to 41 (MEVADSLLGNGSDVPPPCELGLENETLVCLEQPRAAKEWQP) are extracellular. N-linked (GlcNAc...) asparagine glycans are attached at residues N10 and N24. Residues C18 and C29 are joined by a disulfide bond. Residues 42–67 (AVQILLYSLIFLLSVLGNTLVITVLI) traverse the membrane as a helical segment. Topologically, residues 68–77 (RNKRMRTVTN) are cytoplasmic. The helical transmembrane segment at 78–104 (IFLLSLAVSDLMLCLFCMPFNLIPNLL) threads the bilayer. Residues 105 to 115 (KDFIFGSAVCK) lie on the Extracellular side of the membrane. A disulfide bond links C114 and C196. The helical transmembrane segment at 116-137 (TTTYFMGTSVSVSTFNLVAISL) threads the bilayer. The Cytoplasmic portion of the chain corresponds to 138–157 (ERYGAICKPLQSRVWQTKSH). A helical transmembrane segment spans residues 158–178 (ALKVIATTWCLSFTIMTPYPI). The Extracellular portion of the chain corresponds to 179–210 (YSNLVPFTKTNNQTANMCRFLLPNDVMQQSWH). The N-linked (GlcNAc...) asparagine glycan is linked to N190. The helical transmembrane segment at 211 to 234 (TFLLLILFLIPGIVMMVAYGLISL) threads the bilayer. The Cytoplasmic segment spans residues 235–313 (ELYQGIKFDA…NLMAKKRVIR (79 aa)). Residues 250–269 (ARDRNPSTGSSGRYEDGDGC) form a disordered region. Residues 314–334 (MLMVIVVLFFLCWMPIFSANA) form a helical membrane-spanning segment. Residues 335-349 (WRAYDTASAERRLSG) lie on the Extracellular side of the membrane. A helical transmembrane segment spans residues 350 to 373 (TPISFILLLSYTSSCVNPIIYCFM). Topologically, residues 374-428 (NKRFRLGFLATFPCCPHPGPPGPRGEVGEEEEGRTTGASLSRYSYSHMSASAPGP) are cytoplasmic. C387 is lipidated: S-palmitoyl cysteine. Residues 393 to 428 (PPGPRGEVGEEEEGRTTGASLSRYSYSHMSASAPGP) are disordered. A compositionally biased stretch (polar residues) spans 409-422 (TGASLSRYSYSHMS).

The protein belongs to the G-protein coupled receptor 1 family.

It localises to the cell membrane. Its function is as follows. Receptor for cholecystokinin. Mediates pancreatic growth and enzyme secretion, smooth muscle contraction of the gall bladder and stomach. Has a 1000-fold higher affinity for CCK rather than for gastrin. It modulates feeding and dopamine-induced behavior in the central and peripheral nervous system. This receptor mediates its action by association with G proteins that activate a phosphatidylinositol-calcium second messenger system. This chain is Cholecystokinin receptor type A (CCKAR), found in Canis lupus familiaris (Dog).